A 26-amino-acid polypeptide reads, in one-letter code: Dermaseptin-J2 (26 aa).

Residue valine 26 is modified to Valine amide.

As to expression, expressed by the skin glands.

It is found in the secreted. Its function is as follows. Has antimicrobial activity. The polypeptide is Dermaseptin-J2 (Phasmahyla jandaia (Jandaia leaf frog)).